We begin with the raw amino-acid sequence, 382 residues long: Neuropeptide Y receptor type 1 (382 aa).

Residues 1-33 (MNSTSFSQVENHSIFCNFSENSQFLAFESDDCH) lie on the Extracellular side of the membrane. Residues asparagine 2, asparagine 11, and asparagine 17 are each glycosylated (N-linked (GlcNAc...) asparagine). Residues 34–54 (LPLAMIFTLALAYGAVIILGV) form a helical membrane-spanning segment. Topologically, residues 55-75 (TGNLALIMIILKQKEMRNVTN) are cytoplasmic. A helical membrane pass occupies residues 76 to 96 (ILIVNLSFSDLLVAIMCLPFT). Residues 97 to 115 (FVYTLMDHWVFGEAMCKLN) lie on the Extracellular side of the membrane. Cysteines 112 and 197 form a disulfide. The helical transmembrane segment at 116–136 (PFVQCVSITVSIFSLVLIAVE) threads the bilayer. Residues 137–153 (RHQLIINPRGWRPNNRH) are Cytoplasmic-facing. A helical transmembrane segment spans residues 154–174 (AYVGIAVIWVLAVVSSLPFLI). At 175-210 (YQVLTDEPFQNVTLDAFKDKYVCFDKFPSDSHRLSY) the chain is on the extracellular side. Asparagine 185 carries N-linked (GlcNAc...) asparagine glycosylation. The chain crosses the membrane as a helical span at residues 211 to 231 (TTLLLMLQYFGPLCFIFICYF). Over 232–259 (KIYIRLKRRNNMMDKMRDNKYRSSETKR) the chain is Cytoplasmic. A helical transmembrane segment spans residues 260-280 (INIMLLSIVVAFAVCWLPLTI). The Extracellular segment spans residues 281–298 (FNTVFDWNHQIIATCNHN). The chain crosses the membrane as a helical span at residues 299–319 (LLFLLCHLTAMISTCVNPIFY). Residues 320 to 382 (GFLNKNFQRD…KINNDDNEKI (63 aa)) lie on the Cytoplasmic side of the membrane. The S-palmitoyl cysteine moiety is linked to residue cysteine 337. Phosphoserine is present on serine 367.

Belongs to the G-protein coupled receptor 1 family.

The protein localises to the cell membrane. In terms of biological role, receptor for neuropeptide Y and peptide YY. The polypeptide is Neuropeptide Y receptor type 1 (NPY1R) (Canis lupus familiaris (Dog)).